The sequence spans 922 residues: Lacticin 481/lactococcin biosynthesis protein LcnDR2 (922 aa).

In terms of biological role, could be implicated in the processing or the export process of the lantibiotic lacticin 481/lactococcin DR. The sequence is that of Lacticin 481/lactococcin biosynthesis protein LcnDR2 (lcnDR2) from Lactococcus lactis subsp. lactis (Streptococcus lactis).